A 360-amino-acid polypeptide reads, in one-letter code: (+)-6a-hydroxymaackiain 3-O-methyltransferase 1 (360 aa).

Residues 202–205, Asp226, 226–227, 246–247, and Lys260 contribute to the S-adenosyl-L-methionine site; these read VAGG, DQ, and DM. The active-site Proton acceptor is His264.

The protein belongs to the class I-like SAM-binding methyltransferase superfamily. Cation-independent O-methyltransferase family. COMT subfamily.

It catalyses the reaction (+)-6a-hydroxymaackiain + S-adenosyl-L-methionine = (+)-pisatin + S-adenosyl-L-homocysteine + H(+). It carries out the reaction a 4'-hydroxyisoflavone + S-adenosyl-L-methionine = a 4'-methoxyisoflavone + S-adenosyl-L-homocysteine + H(+). In terms of biological role, methyltransferase involved in the phytoalexin pisatin biosynthesis. Has both 3- and 4'-O-methyltransferase activities. Can use (+)-6a-hydroxymaackiain, 2,7,4'-trihydroxyisoflavanone and with much less activity (+)-medicarpin as substrates, but not (-)-6a-hydroxymaackiain, daidzein, formononetin or isoliquiritigenin. May be involved in formononetin biosynthesis. This is (+)-6a-hydroxymaackiain 3-O-methyltransferase 1 (HMM1) from Pisum sativum (Garden pea).